The following is a 235-amino-acid chain: Phosphoribosylformylglycinamidine synthase subunit PurQ (235 aa).

In terms of domain architecture, Glutamine amidotransferase type-1 spans 5–235; it reads FGVVVFPGSN…LLNHVSIVAA (231 aa). Cys88 serves as the catalytic Nucleophile. Active-site residues include His205 and Glu207.

In terms of assembly, part of the FGAM synthase complex composed of 1 PurL, 1 PurQ and 2 PurS subunits.

It localises to the cytoplasm. The catalysed reaction is N(2)-formyl-N(1)-(5-phospho-beta-D-ribosyl)glycinamide + L-glutamine + ATP + H2O = 2-formamido-N(1)-(5-O-phospho-beta-D-ribosyl)acetamidine + L-glutamate + ADP + phosphate + H(+). It carries out the reaction L-glutamine + H2O = L-glutamate + NH4(+). Its pathway is purine metabolism; IMP biosynthesis via de novo pathway; 5-amino-1-(5-phospho-D-ribosyl)imidazole from N(2)-formyl-N(1)-(5-phospho-D-ribosyl)glycinamide: step 1/2. In terms of biological role, part of the phosphoribosylformylglycinamidine synthase complex involved in the purines biosynthetic pathway. Catalyzes the ATP-dependent conversion of formylglycinamide ribonucleotide (FGAR) and glutamine to yield formylglycinamidine ribonucleotide (FGAM) and glutamate. The FGAM synthase complex is composed of three subunits. PurQ produces an ammonia molecule by converting glutamine to glutamate. PurL transfers the ammonia molecule to FGAR to form FGAM in an ATP-dependent manner. PurS interacts with PurQ and PurL and is thought to assist in the transfer of the ammonia molecule from PurQ to PurL. The polypeptide is Phosphoribosylformylglycinamidine synthase subunit PurQ (Salinibacter ruber (strain DSM 13855 / M31)).